Consider the following 306-residue polypeptide: D-alanine--D-alanine ligase (306 aa).

The 199-residue stretch at 102-300 (KIVVASVGVS…YGDIVQWMVE (199 aa)) folds into the ATP-grasp domain. Residue 128-183 (PMEPPYVIKPVCEGSSLGVIIVKENESVPSLNVVGSEWVYADTVIVEKYIPGRELT) participates in ATP binding. Positions 253, 267, and 269 each coordinate Mg(2+).

It belongs to the D-alanine--D-alanine ligase family. Requires Mg(2+) as cofactor. Mn(2+) is required as a cofactor.

The protein localises to the cytoplasm. The catalysed reaction is 2 D-alanine + ATP = D-alanyl-D-alanine + ADP + phosphate + H(+). Its pathway is cell wall biogenesis; peptidoglycan biosynthesis. Its function is as follows. Cell wall formation. In Bartonella henselae (strain ATCC 49882 / DSM 28221 / CCUG 30454 / Houston 1) (Rochalimaea henselae), this protein is D-alanine--D-alanine ligase.